The chain runs to 169 residues: NAD(P)H-quinone oxidoreductase subunit 6, chloroplastic (169 aa).

A run of 5 helical transmembrane segments spans residues 7–27, 29–49, 58–78, 90–110, and 139–159; these read FSSAALTTGILLGCLGVIFLP, IVYAAFLLGAVFFCLAGIYVL, AQVLVYVGAINVLILFAIMLV, SPPLIPGIACIGLLGVLVQMI, and LLAFEVMSLVLLVALVGAIVL.

This sequence belongs to the complex I subunit 6 family. As to quaternary structure, NDH is composed of at least 16 different subunits, 5 of which are encoded in the nucleus.

It is found in the plastid. Its subcellular location is the chloroplast thylakoid membrane. The catalysed reaction is a plastoquinone + NADH + (n+1) H(+)(in) = a plastoquinol + NAD(+) + n H(+)(out). It catalyses the reaction a plastoquinone + NADPH + (n+1) H(+)(in) = a plastoquinol + NADP(+) + n H(+)(out). In terms of biological role, NDH shuttles electrons from NAD(P)H:plastoquinone, via FMN and iron-sulfur (Fe-S) centers, to quinones in the photosynthetic chain and possibly in a chloroplast respiratory chain. The immediate electron acceptor for the enzyme in this species is believed to be plastoquinone. Couples the redox reaction to proton translocation, and thus conserves the redox energy in a proton gradient. This is NAD(P)H-quinone oxidoreductase subunit 6, chloroplastic (ndhG) from Nephroselmis olivacea (Green alga).